Here is a 385-residue protein sequence, read N- to C-terminus: Carbamoyl phosphate synthase small chain (385 aa).

The CPSase stretch occupies residues 1–185 (MSEPAILVLA…LGKGFIEQTQ (185 aa)). Positions 47, 237, and 239 each coordinate L-glutamine. In terms of domain architecture, Glutamine amidotransferase type-1 spans 189-376 (NVVAYDFGVK…INEMRKANLS (188 aa)). The active-site Nucleophile is cysteine 265. 5 residues coordinate L-glutamine: leucine 266, glutamine 269, asparagine 307, glycine 309, and phenylalanine 310. Residues histidine 349 and glutamate 351 contribute to the active site.

Belongs to the CarA family. In terms of assembly, composed of two chains; the small (or glutamine) chain promotes the hydrolysis of glutamine to ammonia, which is used by the large (or ammonia) chain to synthesize carbamoyl phosphate. Tetramer of heterodimers (alpha,beta)4.

It catalyses the reaction hydrogencarbonate + L-glutamine + 2 ATP + H2O = carbamoyl phosphate + L-glutamate + 2 ADP + phosphate + 2 H(+). The catalysed reaction is L-glutamine + H2O = L-glutamate + NH4(+). Its pathway is amino-acid biosynthesis; L-arginine biosynthesis; carbamoyl phosphate from bicarbonate: step 1/1. It participates in pyrimidine metabolism; UMP biosynthesis via de novo pathway; (S)-dihydroorotate from bicarbonate: step 1/3. In terms of biological role, small subunit of the glutamine-dependent carbamoyl phosphate synthetase (CPSase). CPSase catalyzes the formation of carbamoyl phosphate from the ammonia moiety of glutamine, carbonate, and phosphate donated by ATP, constituting the first step of 2 biosynthetic pathways, one leading to arginine and/or urea and the other to pyrimidine nucleotides. The small subunit (glutamine amidotransferase) binds and cleaves glutamine to supply the large subunit with the substrate ammonia. In Pasteurella multocida (strain Pm70), this protein is Carbamoyl phosphate synthase small chain.